A 270-amino-acid chain; its full sequence is Acyl-[acyl-carrier-protein]--UDP-N-acetylglucosamine O-acyltransferase (270 aa).

Belongs to the transferase hexapeptide repeat family. LpxA subfamily. As to quaternary structure, homotrimer.

The protein resides in the cytoplasm. The catalysed reaction is a (3R)-hydroxyacyl-[ACP] + UDP-N-acetyl-alpha-D-glucosamine = a UDP-3-O-[(3R)-3-hydroxyacyl]-N-acetyl-alpha-D-glucosamine + holo-[ACP]. It functions in the pathway glycolipid biosynthesis; lipid IV(A) biosynthesis; lipid IV(A) from (3R)-3-hydroxytetradecanoyl-[acyl-carrier-protein] and UDP-N-acetyl-alpha-D-glucosamine: step 1/6. Its function is as follows. Involved in the biosynthesis of lipid A, a phosphorylated glycolipid that anchors the lipopolysaccharide to the outer membrane of the cell. The chain is Acyl-[acyl-carrier-protein]--UDP-N-acetylglucosamine O-acyltransferase from Helicobacter acinonychis (strain Sheeba).